A 472-amino-acid polypeptide reads, in one-letter code: Violaxanthin de-epoxidase, chloroplastic (472 aa).

Disulfide bonds link cysteine 133–cysteine 151, cysteine 138–cysteine 145, cysteine 157–cysteine 174, cysteine 161–cysteine 170, cysteine 189–cysteine 196, and cysteine 242–cysteine 372. Residues 379–462 (VERLEKTVEE…MEAGEVEKLF (84 aa)) are a coiled coil.

It belongs to the calycin superfamily. Lipocalin family. In terms of processing, disulfide bonds. Reduction of the disulfides results in loss of a rigid structure, a decrease in thermal stability of 15 degrees Celsius and a loss of activity.

It localises to the plastid. Its subcellular location is the chloroplast thylakoid membrane. It carries out the reaction all-trans-violaxanthin + 2 L-ascorbate = all-trans-zeaxanthin + 2 L-dehydroascorbate + 2 H2O. Its activity is regulated as follows. Irreversibly inhibited by DTT and iodoacetamide at pH 5.7 or pH 5.2, but not at pH 7.2. Regulated through Ca(2+) gating of H(+) flux at the CFoH(+) channel. Requires the presence of lipids forming reverse hexagonal structures such as monogalactosyldiacylglyceride (MGDG) or phosphatidylethanolamine. A negative curvature elastic stress in the thylakoid lipid bilayer is required for VDE1 activity. Its function is as follows. Part of the xanthophyll (or violaxanthin) cycle for controlling the concentration of zeaxanthin in chloroplasts. Catalyzes the two-step mono de-epoxidation reaction. Stereospecific for all-trans xanthophylls. Zeaxanthin induces the dissipation of excitation energy in the chlorophyll of the light-harvesting protein complex of photosystem II. This Spinacia oleracea (Spinach) protein is Violaxanthin de-epoxidase, chloroplastic.